We begin with the raw amino-acid sequence, 158 residues long: Dihydroneopterin triphosphate diphosphatase (158 aa).

Substrate contacts are provided by lysine 14, arginine 36, and threonine 47. In terms of domain architecture, Nudix hydrolase spans 14–153 (KNNQSVLVVI…NNAEAIKKYL (140 aa)). The Nudix box signature appears at 48–69 (GTIESDETPKKTAIRELWEEVR). The Mg(2+) site is built by glutamate 63 and glutamate 67. 88 to 91 (FEIF) contacts substrate. Glutamate 124 contributes to the Mg(2+) binding site. Serine 142 is a binding site for substrate.

This sequence belongs to the Nudix hydrolase family. Mg(2+) is required as a cofactor.

The enzyme catalyses 7,8-dihydroneopterin 3'-triphosphate + H2O = 7,8-dihydroneopterin 3'-phosphate + diphosphate + H(+). Its function is as follows. Catalyzes the hydrolysis of dihydroneopterin triphosphate to dihydroneopterin monophosphate and pyrophosphate. Required for efficient folate biosynthesis. Can also hydrolyze nucleoside triphosphates with a preference for dATP. The sequence is that of Dihydroneopterin triphosphate diphosphatase (nudB) from Haemophilus influenzae (strain ATCC 51907 / DSM 11121 / KW20 / Rd).